The sequence spans 348 residues: uncharacterized protein (348 aa).

WD repeat units lie at residues 59–98, 142–182, 185–226, 229–267, 270–309, and 312–347; these read GFQG…VVYS, GHTD…LIQT, DNLG…LLGT, QQPG…ELFS, GPSL…QVTT, and GHQG…SALA.

This is an uncharacterized protein from Synechocystis sp. (strain ATCC 27184 / PCC 6803 / Kazusa).